The primary structure comprises 225 residues: Small ribosomal subunit protein L51-b (225 aa).

Residues 1 to 84 (MKFPDLLRCS…QCAFISSDRF (84 aa)) constitute a mitochondrion transit peptide.

The protein belongs to the bacterial ribosomal protein bS1 family. In terms of assembly, component of the mitochondrial small ribosomal subunit (mt-SSU). Mature yeast 74S mitochondrial ribosomes consist of a small (37S) and a large (54S) subunit. The 37S small subunit contains a 15S ribosomal RNA (15S mt-rRNA) and at least 32 different proteins. The 54S large subunit contains a 21S rRNA (21S mt-rRNA) and at least 45 different proteins. This subunit is mutually exclusive with mrp51/small ribosomal subunit protein bS1m.

The protein resides in the mitochondrion. Functionally, component of the mitochondrial ribosome (mitoribosome), a dedicated translation machinery responsible for the synthesis of mitochondrial genome-encoded proteins, including at least some of the essential transmembrane subunits of the mitochondrial respiratory chain. The mitoribosomes are attached to the mitochondrial inner membrane and translation products are cotranslationally integrated into the membrane. Functionally interacts with the 5'-UTR of mitochondrial mRNAs. Specifically plays a role in the translation of cob1/cytochrome b and cox3. Has a role in meiosis. The polypeptide is Small ribosomal subunit protein L51-b (Schizosaccharomyces pombe (strain 972 / ATCC 24843) (Fission yeast)).